Here is a 144-residue protein sequence, read N- to C-terminus: Large ribosomal subunit protein uL16 (144 aa).

Residues 1–19 (MLLPKRVKYRRQHRPKTTG) are compositionally biased toward basic residues. Residues 1 to 23 (MLLPKRVKYRRQHRPKTTGRSKG) are disordered.

It belongs to the universal ribosomal protein uL16 family. As to quaternary structure, part of the 50S ribosomal subunit.

Binds 23S rRNA and is also seen to make contacts with the A and possibly P site tRNAs. The protein is Large ribosomal subunit protein uL16 of Staphylococcus saprophyticus subsp. saprophyticus (strain ATCC 15305 / DSM 20229 / NCIMB 8711 / NCTC 7292 / S-41).